The primary structure comprises 377 residues: Probable purine permease 22 (377 aa).

10 helical membrane passes run 39–59 (WLRVSIYAIFVIFCQPLATVL), 71–91 (TYVVTLLQLIGFPVLILFRFF), 107–127 (SPSFTTLASVYLCTGLLVSAY), 128–148 (AYLSAVGLLYLPVSTFSLILA), 166–186 (FTPLIVNSLFLLTVSSALLVV), 202–222 (VIGFICTIGASAGIGLVLSLI), 238–258 (VLDLANYQSLVATCVVLIGLF), 283–303 (TLASAAIFWQVYTVGCVGLIF), 309–329 (FSNSITAVGLPIVPVVAVIVF), and 338–358 (IFSIILAIWGFLSFVYQHYLD).

It belongs to the purine permeases (TC 2.A.7.14) family.

Its subcellular location is the membrane. This chain is Probable purine permease 22 (PUP22), found in Arabidopsis thaliana (Mouse-ear cress).